A 250-amino-acid polypeptide reads, in one-letter code: Pyrroloquinoline-quinone synthase (250 aa).

Belongs to the PqqC family.

The enzyme catalyses 6-(2-amino-2-carboxyethyl)-7,8-dioxo-1,2,3,4,7,8-hexahydroquinoline-2,4-dicarboxylate + 3 O2 = pyrroloquinoline quinone + 2 H2O2 + 2 H2O + H(+). The protein operates within cofactor biosynthesis; pyrroloquinoline quinone biosynthesis. Functionally, ring cyclization and eight-electron oxidation of 3a-(2-amino-2-carboxyethyl)-4,5-dioxo-4,5,6,7,8,9-hexahydroquinoline-7,9-dicarboxylic-acid to PQQ. In Xanthomonas oryzae pv. oryzae (strain MAFF 311018), this protein is Pyrroloquinoline-quinone synthase.